The chain runs to 490 residues: Glutamyl-tRNA(Gln) amidotransferase subunit A (490 aa).

Residues Lys78 and Ser153 each act as charge relay system in the active site. Ser177 functions as the Acyl-ester intermediate in the catalytic mechanism.

This sequence belongs to the amidase family. GatA subfamily. As to quaternary structure, heterotrimer of A, B and C subunits.

The catalysed reaction is L-glutamyl-tRNA(Gln) + L-glutamine + ATP + H2O = L-glutaminyl-tRNA(Gln) + L-glutamate + ADP + phosphate + H(+). Allows the formation of correctly charged Gln-tRNA(Gln) through the transamidation of misacylated Glu-tRNA(Gln) in organisms which lack glutaminyl-tRNA synthetase. The reaction takes place in the presence of glutamine and ATP through an activated gamma-phospho-Glu-tRNA(Gln). This Desulforapulum autotrophicum (strain ATCC 43914 / DSM 3382 / VKM B-1955 / HRM2) (Desulfobacterium autotrophicum) protein is Glutamyl-tRNA(Gln) amidotransferase subunit A.